A 124-amino-acid polypeptide reads, in one-letter code: Hydrogenase maturation factor HypA (124 aa).

Ni(2+) is bound at residue H2. Zn(2+) is bound by residues C78, C81, C97, and C100.

This sequence belongs to the HypA/HybF family.

Involved in the maturation of [NiFe] hydrogenases. Required for nickel insertion into the metal center of the hydrogenase. The polypeptide is Hydrogenase maturation factor HypA (Methanocaldococcus jannaschii (strain ATCC 43067 / DSM 2661 / JAL-1 / JCM 10045 / NBRC 100440) (Methanococcus jannaschii)).